A 159-amino-acid polypeptide reads, in one-letter code: Phosphopantetheine adenylyltransferase (159 aa).

Thr10 contacts substrate. ATP is bound by residues 10 to 11 and His18; that span reads TF. Lys42, Met74, and Arg88 together coordinate substrate. Residues 89–91, Glu99, and 124–130 contribute to the ATP site; these read GLR and WSFISSS.

The protein belongs to the bacterial CoaD family. As to quaternary structure, homohexamer. Requires Mg(2+) as cofactor.

Its subcellular location is the cytoplasm. It catalyses the reaction (R)-4'-phosphopantetheine + ATP + H(+) = 3'-dephospho-CoA + diphosphate. Its pathway is cofactor biosynthesis; coenzyme A biosynthesis; CoA from (R)-pantothenate: step 4/5. Functionally, reversibly transfers an adenylyl group from ATP to 4'-phosphopantetheine, yielding dephospho-CoA (dPCoA) and pyrophosphate. This Shigella dysenteriae serotype 1 (strain Sd197) protein is Phosphopantetheine adenylyltransferase.